Reading from the N-terminus, the 926-residue chain is MALANEIMGSRLIFERSSSLASPFHSRFSIKKKTQRTQFSINPFDPRPMRAVNSSGVVAAISEDLVKTLRISTVGRKQEKEEEEEKSVKFKVRAVATVRNKNKEDFKETLVKHLDAFTDKIGRNVVLELMSTQVDPKTNEPKKSKAAVLKDWSKKSNSKAERVHYTAEFTVDSAFGSPGAITVTNKHQKEFFLESITIEGFACGPVHFPCNSWVQSQKDHPSKRILFTNQPYLPSETPSGLRTLREKELENLRGNGKGERKLSDRIYDYDVYNDIGNPDISRELARPTLGGREFPYPRRCRTGRSSTDTDMMSERRVEKPLPMYVPRDEQFEESKQNTFAACRLKAVLHNLIPSLKASILAEDFANFGEIDSLYKEGLLLKLGFQDDMFKKFPLPKIVTTLQKSSEGLLRYDTPKIVSKDKYAWLRDDEFARQAIAGINPVNIERVTSYPPVSNLDPEIYGPGLHSALTEDHIIGQLDGLTVQQALETNRLFMVDYHDIYLPFLDRINALDGRKAYATRTILFLTRLGTLKPIAIELSLPSQSSSNQKSKRVVTPPVDATSNWMWQLAKAHVGSNDAGVHQLVNHWLRTHACLEPFILAAHRQLSAMHPIFKLLDPHMRYTLEINAVARQTLISADGVIESCFTAGQYGLEISSAAYKNKWRFDMEGLPADLIRRGMAVPDPTQPHGLKLLVEDYPYANDGLLLWSAIQTWVRTYVERYYANSNLIQTDTELQAWYSESINVGHADHRDAEWWPKLSTVEDLVSVITTIIWLASAQHAALNFGQYPYGGYVPNRPPLMRRLIPDESDPEFTSFIEDPQKYFFSSMPSLLQTTKFMAVVDTLSTHSPDEEYIGERQQPSIWTGDAEIVDAFYGFSAEIGRIEKEIDKRNRDPSRRNRCGAGVLPYELMAPSSEPGVTCRGVPNSVSI.

Residues 1–58 (MALANEIMGSRLIFERSSSLASPFHSRFSIKKKTQRTQFSINPFDPRPMRAVNSSGVV) constitute a chloroplast transit peptide. In terms of domain architecture, PLAT spans 106 to 228 (FKETLVKHLD…DHPSKRILFT (123 aa)). Residues 231–926 (PYLPSETPSG…CRGVPNSVSI (696 aa)) form the Lipoxygenase domain. Fe cation is bound by residues H585, H590, H777, N781, and I926.

Belongs to the lipoxygenase family. Fe cation is required as a cofactor. Expressed in leaves.

It localises to the plastid. It is found in the chloroplast. The catalysed reaction is (9Z,12Z)-octadecadienoate + O2 = (13S)-hydroperoxy-(9Z,11E)-octadecadienoate. It carries out the reaction (9Z,12Z,15Z)-octadecatrienoate + O2 = (13S)-hydroperoxy-(9Z,11E,15Z)-octadecatrienoate. The protein operates within lipid metabolism; oxylipin biosynthesis. Plant lipoxygenases may be involved in a number of diverse aspects of plant physiology including growth and development, pest resistance, and senescence or responses to wounding. Catalyzes the hydroperoxidation of lipids containing a cis,cis-1,4-pentadiene structure. 13S-lipoxygenase that can use linolenic acid as substrates. This chain is Lipoxygenase 4, chloroplastic (LOX4), found in Arabidopsis thaliana (Mouse-ear cress).